The primary structure comprises 160 residues: GFLDKVIKVCGRDLVRIKIDICGKILLGDMTTGQEKQRILGSGQSAEIMPSSINKEVDSLNMLESIANLPEELRAMLPEKQPSSPQLQQYVPALKNSNVAVKELNKIIRGRQEEAEDNSHSLLKDFNLNIYSPKKRQLDMTVSEKCCQVGCTRRFIANSC.

Intrachain disulfides connect Cys-10-Cys-147, Cys-22-Cys-160, and Cys-146-Cys-151. The propeptide at Gln-34–Pro-133 is connecting peptide.

Belongs to the insulin family. As to quaternary structure, heterodimer of a B chain and an A chain linked by two disulfide bonds. In terms of tissue distribution, expressed in the endometrium during pregnancy and in mammary gland during lactation.

Its subcellular location is the secreted. Relaxin is an ovarian hormone that acts with estrogen to produce dilatation of the birth canal in many mammals. It bears mature young, and allows separation of the pelvic bones. This chain is Prorelaxin (RLN), found in Cavia porcellus (Guinea pig).